Reading from the N-terminus, the 617-residue chain is Protein fem-1 homolog A (617 aa).

ANK repeat units lie at residues 2–32 (DISAAVFNAARDGKLKLMQKLLINKSPEERA), 40–70 (EGGTPLLIAARYGHLPVVHFLLERCGANVAL), 82–111 (EGAPPLWAASAAGHLPVVKALLEHGAPVNN), 115–144 (TNSTPLRAACFDGHLEIVRYLVEHQADLEV), 148–177 (HGHTCLMISCYKGHREIAQFLLEKGADVNR), 181–210 (KGNTALHDCAESGSLEIMKMLLKCDARMER), and 213–242 (YGMTPLLAASVTGHTNIVEFLVHQPRASRE). TPR repeat units follow at residues 245–279 (IHALELLGATFVDKKRDLLGAMRYWRRAMELRWAG) and 339–372 (SYYIRYRGAVYADSGNFERCIRLWKYALDMQQSN). ANK repeat units lie at residues 482 to 524 (GGHT…DVDS) and 528 to 557 (DNNTPLHIAAANGCPDIMAALIRAGAHFDA).

This sequence belongs to the fem-1 family. As to quaternary structure, component of a CRL2 E3 ubiquitin-protein ligase complex, also named ECS (Elongin BC-CUL2/5-SOCS-box protein) complex.

It localises to the mitochondrion. The protein localises to the cytoplasm. It participates in protein modification; protein ubiquitination. In terms of biological role, substrate-recognition component of a Cul2-RING (CRL2) E3 ubiquitin-protein ligase complex of the DesCEND (destruction via C-end degrons) pathway, which recognizes a C-degron located at the extreme C terminus of target proteins, leading to their ubiquitination and degradation. The C-degron recognized by the DesCEND pathway is usually a motif of less than ten residues and can be present in full-length proteins, truncated proteins or proteolytically cleaved forms. The CRL2(FEM1A) complex specifically recognizes proteins with an arginine at the C-terminus: recognizes and binds proteins ending with -Lys/Arg-Xaa-Arg and -Lys/Arg-Xaa-Xaa-Arg C-degrons, leading to their ubiquitination and degradation. The protein is Protein fem-1 homolog A of Danio rerio (Zebrafish).